The primary structure comprises 433 residues: Ectonucleoside triphosphate diphosphohydrolase 5 (433 aa).

The N-terminal stretch at 1–24 is a signal peptide; it reads MATTWGAAFFMLVASCVCSTVFHR. The active-site Proton acceptor is the glutamate 172. Asparagine 232 is a glycosylation site (N-linked (GlcNAc...) asparagine). 2 disulfide bridges follow: cysteine 272–cysteine 308 and cysteine 368–cysteine 382.

It belongs to the GDA1/CD39 NTPase family. In terms of assembly, monomer; active form. Homodimer; disulfide-linked. Homodimers are enzymatically inactive. Ca(2+) is required as a cofactor. Mg(2+) serves as cofactor. N-glycosylated; high-mannose type.

The protein resides in the endoplasmic reticulum. Its subcellular location is the secreted. The catalysed reaction is a ribonucleoside 5'-diphosphate + H2O = a ribonucleoside 5'-phosphate + phosphate + H(+). It carries out the reaction GDP + H2O = GMP + phosphate + H(+). The enzyme catalyses UDP + H2O = UMP + phosphate + H(+). It catalyses the reaction IDP + H2O = IMP + phosphate + H(+). The catalysed reaction is CDP + H2O = CMP + phosphate + H(+). It carries out the reaction ADP + H2O = AMP + phosphate + H(+). It participates in protein modification; protein glycosylation. Functionally, hydrolyzes nucleoside diphosphates with a preference for GDP, IDP and UDP compared to ADP and CDP. In the lumen of the endoplasmic reticulum, hydrolyzes UDP that acts as an end-product feedback inhibitor of the UDP-Glc:glycoprotein glucosyltransferases. UMP can be transported back by an UDP-sugar antiporter to the cytosol where it is consumed to regenerate UDP-glucose. Therefore, it positively regulates protein reglucosylation by clearing UDP from the ER lumen and by promoting the regeneration of UDP-glucose. Protein reglucosylation is essential to proper glycoprotein folding and quality control in the ER. This Ailuropoda melanoleuca (Giant panda) protein is Ectonucleoside triphosphate diphosphohydrolase 5 (ENTPD5).